Consider the following 343-residue polypeptide: Anthranilate phosphoribosyltransferase (343 aa).

5-phospho-alpha-D-ribose 1-diphosphate contacts are provided by residues Gly-84, 87–88, Thr-92, 94–97, 112–120, and Ser-124; these read GD, NIST, and KHGNRSASS. Residue Gly-84 coordinates anthranilate. Position 96 (Ser-96) interacts with Mg(2+). Asn-115 is an anthranilate binding site. Arg-170 lines the anthranilate pocket. Asp-229 and Glu-230 together coordinate Mg(2+).

It belongs to the anthranilate phosphoribosyltransferase family. Homodimer. Mg(2+) is required as a cofactor.

The enzyme catalyses N-(5-phospho-beta-D-ribosyl)anthranilate + diphosphate = 5-phospho-alpha-D-ribose 1-diphosphate + anthranilate. It participates in amino-acid biosynthesis; L-tryptophan biosynthesis; L-tryptophan from chorismate: step 2/5. Its function is as follows. Catalyzes the transfer of the phosphoribosyl group of 5-phosphorylribose-1-pyrophosphate (PRPP) to anthranilate to yield N-(5'-phosphoribosyl)-anthranilate (PRA). The sequence is that of Anthranilate phosphoribosyltransferase from Bordetella bronchiseptica (strain ATCC BAA-588 / NCTC 13252 / RB50) (Alcaligenes bronchisepticus).